A 105-amino-acid polypeptide reads, in one-letter code: Nucleoid-associated protein TTHA1599 (105 aa).

Belongs to the YbaB/EbfC family. In terms of assembly, homodimer.

Its subcellular location is the cytoplasm. It is found in the nucleoid. Its function is as follows. Binds to DNA and alters its conformation. May be involved in regulation of gene expression, nucleoid organization and DNA protection. This Thermus thermophilus (strain ATCC 27634 / DSM 579 / HB8) protein is Nucleoid-associated protein TTHA1599.